The following is a 229-amino-acid chain: Orotate phosphoribosyltransferase (229 aa).

Residues Arg-107, Lys-108, Lys-111, His-113, and 133-141 contribute to the 5-phospho-alpha-D-ribose 1-diphosphate site; that span reads EDLTTAGGS. Residue Thr-137 coordinates orotate.

It belongs to the purine/pyrimidine phosphoribosyltransferase family. PyrE subfamily. In terms of assembly, homodimer. The cofactor is Mg(2+).

The enzyme catalyses orotidine 5'-phosphate + diphosphate = orotate + 5-phospho-alpha-D-ribose 1-diphosphate. It participates in pyrimidine metabolism; UMP biosynthesis via de novo pathway; UMP from orotate: step 1/2. In terms of biological role, catalyzes the transfer of a ribosyl phosphate group from 5-phosphoribose 1-diphosphate to orotate, leading to the formation of orotidine monophosphate (OMP). The sequence is that of Orotate phosphoribosyltransferase from Rhizobium etli (strain CIAT 652).